We begin with the raw amino-acid sequence, 99 residues long: UPF0751 protein BCE_A0020 (99 aa).

It belongs to the UPF0751 family.

The polypeptide is UPF0751 protein BCE_A0020 (Bacillus cereus (strain ATCC 10987 / NRS 248)).